We begin with the raw amino-acid sequence, 233 residues long: MVIVMEIYEGKAKKVIPLDDGKVIIEFKDDATAFNGKKKAQFKGKGWLNAQISAILFKVLEEKGIKTHFIGVAGDNKLIVEKLKMYPVEVVVRNVIAGSLKKRLPLKEGTELSEPIVELYYKNDDLGDPMINHYHAKVLGVSERELKEIENIALKVNNILKEYFAQRGIILVDFKLEFGKNERGEIILGDEISPDTCRFWDAETKESLDKDVFRFDKGELINAYEELYKRLTA.

It belongs to the SAICAR synthetase family.

The catalysed reaction is 5-amino-1-(5-phospho-D-ribosyl)imidazole-4-carboxylate + L-aspartate + ATP = (2S)-2-[5-amino-1-(5-phospho-beta-D-ribosyl)imidazole-4-carboxamido]succinate + ADP + phosphate + 2 H(+). The protein operates within purine metabolism; IMP biosynthesis via de novo pathway; 5-amino-1-(5-phospho-D-ribosyl)imidazole-4-carboxamide from 5-amino-1-(5-phospho-D-ribosyl)imidazole-4-carboxylate: step 1/2. The chain is Phosphoribosylaminoimidazole-succinocarboxamide synthase from Thermococcus sibiricus (strain DSM 12597 / MM 739).